A 233-amino-acid polypeptide reads, in one-letter code: Pre-hexon-linking protein VIII (233 aa).

Thr-64 carries the phosphothreonine; by host modification. The propeptide occupies 112 to 163 (ARHVRFRDRPSPYSSGSIKRLIIRGRGIQLNDEVVSSSTGPRPDGVFQLGGA). Ser-180 is subject to Phosphoserine; by host.

It belongs to the adenoviridae hexon-linking protein family. As to quaternary structure, interacts with the peripentonal hexons as well as the hexons in the facets. Part of a complex composed of the core-capsid bridging protein, the endosome lysis protein VI and the hexon-linking protein VIII; these interactions bridge the virus core to the capsid. Cleaved by the viral protease during virion maturation. May cause the middle segment to be shed from the capsid.

It is found in the virion. It localises to the host nucleus. Structural component of the virion that acts as a cement protein on the capsid interior and which glue the peripentonal hexons and group-of-nine hexons together. The protein is Pre-hexon-linking protein VIII of Homo sapiens (Human).